A 577-amino-acid chain; its full sequence is Probable cytochrome c biosynthesis protein (577 aa).

This sequence belongs to the CcmF/CycK/Ccl1/NrfE/CcsA family.

The protein resides in the mitochondrion. Could be involved in assembly and maturation of cytochromes c. May play a role in guidance of apocytochromes and heme groups for the covalent linkage introduced by the cytochrome-c-heme lyase. The protein is Probable cytochrome c biosynthesis protein of Oenothera berteroana (Bertero's evening primrose).